The chain runs to 718 residues: Centromere/kinetochore protein zw10 (718 aa).

It belongs to the ZW10 family.

It is found in the cytoplasm. Its subcellular location is the nucleus. The protein localises to the chromosome. The protein resides in the centromere. It localises to the kinetochore. Its function is as follows. Required for accurate chromosome segregation. This is Centromere/kinetochore protein zw10 (mit(1)15) from Drosophila pseudoobscura pseudoobscura (Fruit fly).